We begin with the raw amino-acid sequence, 151 residues long: MKIVIQRVKQAQVSIENQIHNKISSGLLLLVGVGPDDGPDDLDYAVRKIVHMRIFSDQEGKMNLSVKDIEGEILSISQFTLHADTKKGNRPAFVKAAPPELASRLYDEFNQLLAQEVPTKMGIFGADMQVELINDGPVTIILDTKNRREEV.

Positions 136–137 (GP) match the Gly-cisPro motif, important for rejection of L-amino acids motif.

This sequence belongs to the DTD family. In terms of assembly, homodimer.

The protein localises to the cytoplasm. The enzyme catalyses glycyl-tRNA(Ala) + H2O = tRNA(Ala) + glycine + H(+). It catalyses the reaction a D-aminoacyl-tRNA + H2O = a tRNA + a D-alpha-amino acid + H(+). An aminoacyl-tRNA editing enzyme that deacylates mischarged D-aminoacyl-tRNAs. Also deacylates mischarged glycyl-tRNA(Ala), protecting cells against glycine mischarging by AlaRS. Acts via tRNA-based rather than protein-based catalysis; rejects L-amino acids rather than detecting D-amino acids in the active site. By recycling D-aminoacyl-tRNA to D-amino acids and free tRNA molecules, this enzyme counteracts the toxicity associated with the formation of D-aminoacyl-tRNA entities in vivo and helps enforce protein L-homochirality. The sequence is that of D-aminoacyl-tRNA deacylase from Streptococcus gordonii (strain Challis / ATCC 35105 / BCRC 15272 / CH1 / DL1 / V288).